The primary structure comprises 393 residues: (S)-mandelate dehydrogenase (393 aa).

The FMN hydroxy acid dehydrogenase domain occupies 1 to 377; it reads MSQNLFNVED…SPDYLQNEGV (377 aa). (S)-mandelate is bound at residue Tyr-26. FMN contacts are provided by residues 79-81, Ser-108, and Gln-129; that span reads PTG. Residue Tyr-131 participates in (S)-mandelate binding. Thr-156 contacts FMN. Arg-165 serves as a coordination point for (S)-mandelate. Lys-250 contributes to the FMN binding site. Positions 274 and 277 each coordinate (S)-mandelate. His-274 serves as the catalytic Proton acceptor. FMN contacts are provided by residues 303–307 and 326–327; these read DSGFR and GR.

The protein belongs to the FMN-dependent alpha-hydroxy acid dehydrogenase family. Homotetramer. The cofactor is FMN.

Its subcellular location is the cell inner membrane. The catalysed reaction is (S)-mandelate + A = phenylglyoxylate + AH2. Its pathway is aromatic compound metabolism; (R)-mandelate degradation; benzoate from (R)-mandelate: step 2/4. Catalyzes the dehydrogenation of (S)-mandelate to phenylglyoxylate (benzoylformate). Is likely involved in the utilization of mandelate as a sole source of carbon and energy for growth. Active in vitro with the artificial electron acceptors 2,6-dichlorophenolindophenol (DCPIP) or ferricyanide, but in vivo most likely transfer the electron pair from the reduced flavin to a component of the electron transport chain in the membrane, possibly a quinone. Shows very low activity with oxygen as the electron acceptor, and also with 3-indolelactate and medium chain 2-hydroxyacids as substrates. In Pseudomonas putida (Arthrobacter siderocapsulatus), this protein is (S)-mandelate dehydrogenase.